The following is a 267-amino-acid chain: Glucosamine-6-phosphate deaminase (267 aa).

Catalysis depends on Asp76, which acts as the Proton acceptor; for enolization step. The active-site For ring-opening step is the Asp145. His147 (proton acceptor; for ring-opening step) is an active-site residue. Glu152 functions as the For ring-opening step in the catalytic mechanism.

It belongs to the glucosamine/galactosamine-6-phosphate isomerase family. Homohexamer.

It localises to the cytoplasm. It carries out the reaction alpha-D-glucosamine 6-phosphate + H2O = beta-D-fructose 6-phosphate + NH4(+). Its pathway is nucleotide-sugar biosynthesis; UDP-N-acetyl-alpha-D-glucosamine biosynthesis; alpha-D-glucosamine 6-phosphate from D-fructose 6-phosphate: step 1/1. In terms of biological role, catalyzes the reversible conversion of alpha-D-glucosamine 6-phosphate (GlcN-6P) into beta-D-fructose 6-phosphate (Fru-6P) and ammonium ion, a regulatory reaction step in de novo uridine diphosphate-N-acetyl-alpha-D-glucosamine (UDP-GlcNAc) biosynthesis via hexosamine pathway. The polypeptide is Glucosamine-6-phosphate deaminase (Dictyostelium discoideum (Social amoeba)).